The sequence spans 552 residues: NADH-ubiquinone oxidoreductase chain 5 (552 aa).

A run of 15 helical transmembrane segments spans residues 11-31, 36-56, 68-88, 89-109, 121-141, 152-172, 196-216, 229-249, 256-274, 287-307, 322-342, 365-386, 406-426, 453-473, and 532-552; these read PVTI…PFGL, LAMT…AYAI, FYII…SDNY, LMMF…ISFW, SAIL…GLMI, IALV…LLLL, TPVS…YVLV, LLII…IAIV, VIAL…AIGI, HAFF…SFVA, LPFS…IPGL, ILYY…RVLY, SLGM…IGYS, AYIK…LVYV, and SRAV…LFFI.

The protein belongs to the complex I subunit 5 family.

Its subcellular location is the mitochondrion inner membrane. The enzyme catalyses a ubiquinone + NADH + 5 H(+)(in) = a ubiquinol + NAD(+) + 4 H(+)(out). Core subunit of the mitochondrial membrane respiratory chain NADH dehydrogenase (Complex I) that is believed to belong to the minimal assembly required for catalysis. Complex I functions in the transfer of electrons from NADH to the respiratory chain. The immediate electron acceptor for the enzyme is believed to be ubiquinone. The polypeptide is NADH-ubiquinone oxidoreductase chain 5 (NAD5) (Candida albicans (strain SC5314 / ATCC MYA-2876) (Yeast)).